The chain runs to 275 residues: Phage-like element PBSX protein XkdF (275 aa).

The tract at residues 247-275 (KARGASKQTADDTGGNTEQVKKSIWSGLL) is disordered.

It to B.subtilis YqbD.

The chain is Phage-like element PBSX protein XkdF (xkdF) from Bacillus subtilis (strain 168).